The sequence spans 452 residues: GTPase Der (452 aa).

2 consecutive EngA-type G domains span residues 4 to 169 and 177 to 352; these read PIVA…PTTE and IKVA…ASHR. Residues 10–17, 57–61, 120–123, 183–190, 230–234, and 295–298 contribute to the GTP site; these read GRPNVGKS, DTGGL, NKCE, DTAGI, and NKWD. A KH-like domain is found at 353-438; that stretch reads RRVSTAVINE…PIRLIWRGKS (86 aa).

It belongs to the TRAFAC class TrmE-Era-EngA-EngB-Septin-like GTPase superfamily. EngA (Der) GTPase family. In terms of assembly, associates with the 50S ribosomal subunit.

In terms of biological role, GTPase that plays an essential role in the late steps of ribosome biogenesis. The sequence is that of GTPase Der from Gloeothece citriformis (strain PCC 7424) (Cyanothece sp. (strain PCC 7424)).